Reading from the N-terminus, the 58-residue chain is Probable mRNA interferase HicA 2 (58 aa).

This sequence belongs to the HicA mRNA interferase family. As to quaternary structure, probably forms a complex with the cognate antitoxin HicB 2 which inhibits the mRNA interferase activity.

In terms of biological role, toxic component of a type II toxin-antitoxin (TA) system. A probable translation-independent mRNA interferase. This is Probable mRNA interferase HicA 2 (hicA2) from Photorhabdus laumondii subsp. laumondii (strain DSM 15139 / CIP 105565 / TT01) (Photorhabdus luminescens subsp. laumondii).